Reading from the N-terminus, the 219-residue chain is MEEIKVNVELREKAGVKGVLSAIRAEKKVPAVIYGGQKEPISVSITEKDLKAILKAGSNSVVTLSTPAGKETAIIKEVQYHVVKDTPNHVDFQRISLKEKIDVVVPLKLTGESADVKIYGALINQVLREVAIRALPTAIPHEIAVDISALTIHKAIHISDLSLSKDIEVLGDPERAIVHLMVPREEETVAAPADTAVQPESSSTKGKKDEDGALAKDKK.

The disordered stretch occupies residues 188 to 219; the sequence is TVAAPADTAVQPESSSTKGKKDEDGALAKDKK. Over residues 206–219 the composition is skewed to basic and acidic residues; sequence GKKDEDGALAKDKK.

This sequence belongs to the bacterial ribosomal protein bL25 family. CTC subfamily. In terms of assembly, part of the 50S ribosomal subunit; part of the 5S rRNA/L5/L18/L25 subcomplex. Contacts the 5S rRNA. Binds to the 5S rRNA independently of L5 and L18.

In terms of biological role, this is one of the proteins that binds to the 5S RNA in the ribosome where it forms part of the central protuberance. The protein is Large ribosomal subunit protein bL25 of Elusimicrobium minutum (strain Pei191).